The primary structure comprises 65 residues: UPF0434 protein RPB_0294 (65 aa).

This sequence belongs to the UPF0434 family.

The chain is UPF0434 protein RPB_0294 from Rhodopseudomonas palustris (strain HaA2).